Reading from the N-terminus, the 24-residue chain is FLPFIAGMAANFLPKIFCAISKKC.

Cys-18 and Cys-24 are joined by a disulfide.

As to expression, expressed by the skin glands.

It is found in the secreted. In terms of biological role, antibacterial activity against Gram-positive bacterium S.aureus and Gram-negative bacterium E.coli. In Lithobates berlandieri (Rio Grande leopard frog), this protein is Brevinin-1Bf.